A 1025-amino-acid chain; its full sequence is Multidrug resistance protein MdtC (1025 aa).

12 helical membrane-spanning segments follow: residues 15-35 (ILISLAITLCGILGFRLLPVA), 333-353 (EVEQTLVISVALVILVVFLFL), 360-380 (LIPAVAVPVSLIGTFAAMYLC), 387-407 (LSLMALTIATGFVVDDAIVVL), 431-451 (VGFTVLSMSLSLVAVFLPLLL), 469-489 (VAIGISLAVSLTLTPMMCGWL), 528-548 (LTGLVVLGTIALSVWLYISIP), 851-871 (AQVILILAAIATVYIVLGMLY), 875-895 (VHPLTILSTLPSAGVGALLAL), 897-917 (IFDAPFSLIALIGIMLLIGIV), 953-973 (PIMMTTLAALFGALPLVLSGG), and 984-1004 (ITIVGGLVMSQLLTLYTTPVV).

The protein belongs to the resistance-nodulation-cell division (RND) (TC 2.A.6) family. MdtC subfamily. As to quaternary structure, part of a tripartite efflux system composed of MdtA, MdtB and MdtC. MdtC forms a heteromultimer with MdtB.

It localises to the cell inner membrane. This is Multidrug resistance protein MdtC from Klebsiella pneumoniae (strain 342).